The chain runs to 434 residues: 3-phosphoshikimate 1-carboxyvinyltransferase (434 aa).

3-phosphoshikimate contacts are provided by lysine 15, serine 16, and arginine 20. A phosphoenolpyruvate-binding site is contributed by lysine 15. 2 residues coordinate phosphoenolpyruvate: glycine 96 and arginine 124. 3-phosphoshikimate-binding residues include serine 169, glutamine 171, serine 195, aspartate 319, and lysine 346. Glutamine 171 lines the phosphoenolpyruvate pocket. Aspartate 319 serves as the catalytic Proton acceptor. Positions 350 and 394 each coordinate phosphoenolpyruvate.

This sequence belongs to the EPSP synthase family. Monomer.

The protein localises to the cytoplasm. The enzyme catalyses 3-phosphoshikimate + phosphoenolpyruvate = 5-O-(1-carboxyvinyl)-3-phosphoshikimate + phosphate. It functions in the pathway metabolic intermediate biosynthesis; chorismate biosynthesis; chorismate from D-erythrose 4-phosphate and phosphoenolpyruvate: step 6/7. Functionally, catalyzes the transfer of the enolpyruvyl moiety of phosphoenolpyruvate (PEP) to the 5-hydroxyl of shikimate-3-phosphate (S3P) to produce enolpyruvyl shikimate-3-phosphate and inorganic phosphate. This is 3-phosphoshikimate 1-carboxyvinyltransferase from Prosthecochloris aestuarii (strain DSM 271 / SK 413).